Here is a 392-residue protein sequence, read N- to C-terminus: Carbamoyl phosphate synthase small chain (392 aa).

The CPSase stretch occupies residues 1 to 174 (MSKKALLALE…EVIVENPEGD (174 aa)). The L-glutamine site is built by Ser47, Gly224, and Gly226. Positions 176–392 (SVVVLDSGVK…EFKRLIKEVR (217 aa)) constitute a Glutamine amidotransferase type-1 domain. Cys252 (nucleophile) is an active-site residue. Residues Leu253, Gln256, Asn294, Gly296, and Phe297 each contribute to the L-glutamine site. Active-site residues include His367 and Glu369.

It belongs to the CarA family. As to quaternary structure, composed of two chains; the small (or glutamine) chain promotes the hydrolysis of glutamine to ammonia, which is used by the large (or ammonia) chain to synthesize carbamoyl phosphate. Tetramer of heterodimers (alpha,beta)4.

It carries out the reaction hydrogencarbonate + L-glutamine + 2 ATP + H2O = carbamoyl phosphate + L-glutamate + 2 ADP + phosphate + 2 H(+). The catalysed reaction is L-glutamine + H2O = L-glutamate + NH4(+). Its pathway is amino-acid biosynthesis; L-arginine biosynthesis; carbamoyl phosphate from bicarbonate: step 1/1. The protein operates within pyrimidine metabolism; UMP biosynthesis via de novo pathway; (S)-dihydroorotate from bicarbonate: step 1/3. Its function is as follows. Small subunit of the glutamine-dependent carbamoyl phosphate synthetase (CPSase). CPSase catalyzes the formation of carbamoyl phosphate from the ammonia moiety of glutamine, carbonate, and phosphate donated by ATP, constituting the first step of 2 biosynthetic pathways, one leading to arginine and/or urea and the other to pyrimidine nucleotides. The small subunit (glutamine amidotransferase) binds and cleaves glutamine to supply the large subunit with the substrate ammonia. The chain is Carbamoyl phosphate synthase small chain from Thermotoga maritima (strain ATCC 43589 / DSM 3109 / JCM 10099 / NBRC 100826 / MSB8).